We begin with the raw amino-acid sequence, 217 residues long: Large ribosomal subunit protein uL3 (217 aa).

The interval 137–160 (VSASHGSHRNHRKPGSIGASSTPS) is disordered.

Belongs to the universal ribosomal protein uL3 family. In terms of assembly, part of the 50S ribosomal subunit. Forms a cluster with proteins L14 and L19.

Its function is as follows. One of the primary rRNA binding proteins, it binds directly near the 3'-end of the 23S rRNA, where it nucleates assembly of the 50S subunit. This chain is Large ribosomal subunit protein uL3, found in Clavibacter sepedonicus (Clavibacter michiganensis subsp. sepedonicus).